The primary structure comprises 156 residues: SsrA-binding protein (156 aa).

The protein belongs to the SmpB family.

It localises to the cytoplasm. Functionally, required for rescue of stalled ribosomes mediated by trans-translation. Binds to transfer-messenger RNA (tmRNA), required for stable association of tmRNA with ribosomes. tmRNA and SmpB together mimic tRNA shape, replacing the anticodon stem-loop with SmpB. tmRNA is encoded by the ssrA gene; the 2 termini fold to resemble tRNA(Ala) and it encodes a 'tag peptide', a short internal open reading frame. During trans-translation Ala-aminoacylated tmRNA acts like a tRNA, entering the A-site of stalled ribosomes, displacing the stalled mRNA. The ribosome then switches to translate the ORF on the tmRNA; the nascent peptide is terminated with the 'tag peptide' encoded by the tmRNA and targeted for degradation. The ribosome is freed to recommence translation, which seems to be the essential function of trans-translation. In Clostridium beijerinckii (strain ATCC 51743 / NCIMB 8052) (Clostridium acetobutylicum), this protein is SsrA-binding protein.